Reading from the N-terminus, the 411-residue chain is Serine hydroxymethyltransferase (411 aa).

Residues Leu-119 and 123 to 125 each bind (6S)-5,6,7,8-tetrahydrofolate; that span reads GHL. An N6-(pyridoxal phosphate)lysine modification is found at Lys-228. Residue 351–353 participates in (6S)-5,6,7,8-tetrahydrofolate binding; it reads SPF.

It belongs to the SHMT family. Homodimer. Requires pyridoxal 5'-phosphate as cofactor.

It is found in the cytoplasm. It carries out the reaction (6R)-5,10-methylene-5,6,7,8-tetrahydrofolate + glycine + H2O = (6S)-5,6,7,8-tetrahydrofolate + L-serine. It functions in the pathway one-carbon metabolism; tetrahydrofolate interconversion. Its pathway is amino-acid biosynthesis; glycine biosynthesis; glycine from L-serine: step 1/1. Catalyzes the reversible interconversion of serine and glycine with tetrahydrofolate (THF) serving as the one-carbon carrier. This reaction serves as the major source of one-carbon groups required for the biosynthesis of purines, thymidylate, methionine, and other important biomolecules. Also exhibits THF-independent aldolase activity toward beta-hydroxyamino acids, producing glycine and aldehydes, via a retro-aldol mechanism. This Clostridium novyi (strain NT) protein is Serine hydroxymethyltransferase.